Reading from the N-terminus, the 450-residue chain is tRNA modification GTPase MnmE (450 aa).

3 residues coordinate (6S)-5-formyl-5,6,7,8-tetrahydrofolate: Arg23, Glu81, and Lys120. One can recognise a TrmE-type G domain in the interval 216 to 373; sequence GIHLVLAGKP…LLKKIATLAG (158 aa). Residues 226 to 231, 245 to 251, 270 to 273, and 337 to 340 contribute to the GTP site; these read NAGKSS, TPQAGTT, DTAG, and NKAD. Residues Ser230 and Thr251 each coordinate Mg(2+). Residue Lys450 coordinates (6S)-5-formyl-5,6,7,8-tetrahydrofolate.

Belongs to the TRAFAC class TrmE-Era-EngA-EngB-Septin-like GTPase superfamily. TrmE GTPase family. In terms of assembly, homodimer. Heterotetramer of two MnmE and two MnmG subunits. The cofactor is K(+).

Its subcellular location is the cytoplasm. Functionally, exhibits a very high intrinsic GTPase hydrolysis rate. Involved in the addition of a carboxymethylaminomethyl (cmnm) group at the wobble position (U34) of certain tRNAs, forming tRNA-cmnm(5)s(2)U34. In Dichelobacter nodosus (strain VCS1703A), this protein is tRNA modification GTPase MnmE.